The chain runs to 492 residues: MKAFHLLLFDGSLIFPECILIFGLILLLMIDSTSDQKDISWFYFISSTSLVMSITALLFRWREEPMIAFSGNLQTNNFNEIFQFLILLCSTLCIPLSVEYIECTEMAITEFLLFILTTTLGGMFLCGANDLITIFVALECFSLCSYLLSGYTKKDVRSNEATTKYLLMGGASSSILVHGFSWLYGSSGGEIELQEIVNGLINTQMYNSPGILIALLFITVGIGFKLSPAPSHQWTPDVYEGSPTPVVAFLSVTSKVAASASATRIFDIPFYFSSNEWHLLLEILAILSMILGNLIAITQTSMKRMLAYSSIGQIGYVIIGIIVGDSNGGYASMITYMLFYISMNLGTFACIVSFGLRTGTDNIRDYAGLYTKDPYLALSLALCLLSLGGLPPLAGFFGKLHLFWCGWQAGLYFLVSIGLLTSVVSIYYYLKIIKLLMTGRNQEITPHVRNYRRSPFRSNNSIEFSMIVCVIASTIPGISMNPIIEIAQDTLF.

13 consecutive transmembrane segments (helical) span residues 6-26 (LLLFDGSLIFPECILIFGLIL), 39-59 (ISWFYFISSTSLVMSITALLF), 81-101 (IFQFLILLCSTLCIPLSVEYI), 106-126 (MAITEFLLFILTTTLGGMFLC), 131-151 (LITIFVALECFSLCSYLLSGY), 165-185 (YLLMGGASSSILVHGFSWLYG), 209-229 (PGILIALLFITVGIGFKLSPA), 277-297 (WHLLLEILAILSMILGNLIAI), 305-325 (MLAYSSIGQIGYVIIGIIVGD), 336-356 (YMLFYISMNLGTFACIVSFGL), 377-397 (ALSLALCLLSLGGLPPLAGFF), 400-420 (LHLFWCGWQAGLYFLVSIGLL), and 464-484 (FSMIVCVIASTIPGISMNPII).

It belongs to the complex I subunit 2 family. In terms of assembly, NDH is composed of at least 16 different subunits, 5 of which are encoded in the nucleus.

The protein localises to the plastid. It is found in the chloroplast thylakoid membrane. The catalysed reaction is a plastoquinone + NADH + (n+1) H(+)(in) = a plastoquinol + NAD(+) + n H(+)(out). It catalyses the reaction a plastoquinone + NADPH + (n+1) H(+)(in) = a plastoquinol + NADP(+) + n H(+)(out). NDH shuttles electrons from NAD(P)H:plastoquinone, via FMN and iron-sulfur (Fe-S) centers, to quinones in the photosynthetic chain and possibly in a chloroplast respiratory chain. The immediate electron acceptor for the enzyme in this species is believed to be plastoquinone. Couples the redox reaction to proton translocation, and thus conserves the redox energy in a proton gradient. This Phaseolus vulgaris (Kidney bean) protein is NAD(P)H-quinone oxidoreductase subunit 2 A, chloroplastic.